The chain runs to 333 residues: MDERLVSGSALGGEAAFEPTLRPQYLHEYIGQDKVKENLQVFIEAAKLREETLDHVLLYGPPGLGKTTLAAIIANEMGVKMRATSGPALERPGDLAALLTSLEPGDVLFIDEIHRLPRTVEEVLYPAMEDYCLDITVGKGPEARSLRLDLPPFTLVGATTRAGALSAPLRDRFGVISRLEYYQVDQLAQIIERAAAILHIIINNEAALELARRARGTPRIANRLLRRVRDFAQVRGDGEITLPLAVEALERLQVDRLGLDHIDHKLLLAIIEKFAGGPVGLETMAAVIGEEAQTIEEVYEPYLLQIGLLQRTPRGRVATPAAYAHLGMEVPKR.

Residues M1 to Y182 form a large ATPase domain (RuvB-L) region. ATP contacts are provided by residues L21, R22, G63, K66, T67, T68, E129–Y131, R172, Y182, and R219. T67 lines the Mg(2+) pocket. Residues Q183 to Q253 form a small ATPAse domain (RuvB-S) region. Positions R256–R333 are head domain (RuvB-H). Residues R311 and R316 each coordinate DNA.

This sequence belongs to the RuvB family. In terms of assembly, homohexamer. Forms an RuvA(8)-RuvB(12)-Holliday junction (HJ) complex. HJ DNA is sandwiched between 2 RuvA tetramers; dsDNA enters through RuvA and exits via RuvB. An RuvB hexamer assembles on each DNA strand where it exits the tetramer. Each RuvB hexamer is contacted by two RuvA subunits (via domain III) on 2 adjacent RuvB subunits; this complex drives branch migration. In the full resolvosome a probable DNA-RuvA(4)-RuvB(12)-RuvC(2) complex forms which resolves the HJ.

The protein resides in the cytoplasm. The enzyme catalyses ATP + H2O = ADP + phosphate + H(+). The RuvA-RuvB-RuvC complex processes Holliday junction (HJ) DNA during genetic recombination and DNA repair, while the RuvA-RuvB complex plays an important role in the rescue of blocked DNA replication forks via replication fork reversal (RFR). RuvA specifically binds to HJ cruciform DNA, conferring on it an open structure. The RuvB hexamer acts as an ATP-dependent pump, pulling dsDNA into and through the RuvAB complex. RuvB forms 2 homohexamers on either side of HJ DNA bound by 1 or 2 RuvA tetramers; 4 subunits per hexamer contact DNA at a time. Coordinated motions by a converter formed by DNA-disengaged RuvB subunits stimulates ATP hydrolysis and nucleotide exchange. Immobilization of the converter enables RuvB to convert the ATP-contained energy into a lever motion, pulling 2 nucleotides of DNA out of the RuvA tetramer per ATP hydrolyzed, thus driving DNA branch migration. The RuvB motors rotate together with the DNA substrate, which together with the progressing nucleotide cycle form the mechanistic basis for DNA recombination by continuous HJ branch migration. Branch migration allows RuvC to scan DNA until it finds its consensus sequence, where it cleaves and resolves cruciform DNA. The protein is Holliday junction branch migration complex subunit RuvB of Geobacillus thermodenitrificans (strain NG80-2).